The chain runs to 372 residues: Protein phosphatase 1 regulatory subunit 42 (372 aa).

LRR repeat units follow at residues 30 to 51 (RITHLNFSNKNIDEVEDLTMCR), 52 to 71 (NLTVLYLYDNNINQIKNLGS), 72 to 93 (NLTHLYLQNNCISCIENLSGLK), 94 to 115 (RLEKLYLGGNCLTVVEGLEGLR), 116 to 137 (ELRELHIENQRLPPGEKLLFDP), 146 to 167 (SLSVLNISNNNIDELKDLAVLE), and 168 to 189 (NLTQFVAADNQLKEIKDLEFVL). Residues 203-241 (NPVCLKPKYREKVTIISKTLEILDGKEIKEMARQFLLNW) enclose the LRRCT domain.

It is found in the cytoplasm. Its subcellular location is the cytoskeleton. The protein resides in the microtubule organizing center. It localises to the centrosome. Functionally, may regulate phosphatase activity of protein phosphatase 1 (PP1) complexes. The chain is Protein phosphatase 1 regulatory subunit 42 (ppp1r42) from Xenopus laevis (African clawed frog).